We begin with the raw amino-acid sequence, 274 residues long: Enoyl-CoA isomerase/hydratase fer4 (274 aa).

Substrate is bound by residues 77 to 81 (AGADL) and Gly124. Residues 79-109 (ADLKERREMSEAEVIEFLQDLRHMLEQVEKL) adopt a coiled-coil conformation.

The protein belongs to the enoyl-CoA hydratase/isomerase family.

The enzyme catalyses a (3S)-3-hydroxyacyl-CoA = a (2E)-enoyl-CoA + H2O. It carries out the reaction a 4-saturated-(3S)-3-hydroxyacyl-CoA = a (3E)-enoyl-CoA + H2O. Its pathway is siderophore biosynthesis. Its function is as follows. Enoyl-CoA isomerase/hydratase; part of the gene cluster that mediates the biosynthesis of siderophore ferrichrome A which is contributing to organismal virulence. The first step of ferrichrome A biosynthesis is performed by the HMG-CoA synthase hcs1 which catalyzes the generation of HMG-CoA and CoA using acetoacetyl-CoA and acetyl-CoA as substrates. The enoyl-CoA isomerase/hydratase fer4 then catalyzes the conversion of hcs1-produced HMG-CoA to methylglutaconyl-CoA. The acyltransferase fer5 then fuses the fer4-generated methylglutaconyl-CoA with sid1-generated hydroxyornithine to yield methylglutaconyl hydroxyornithine. Methylglutaconyl hydroxyornithine is then available for use by the NRPS fer3 to generate ferrichrome A. The chain is Enoyl-CoA isomerase/hydratase fer4 from Mycosarcoma maydis (Corn smut fungus).